Reading from the N-terminus, the 192-residue chain is Crossover junction endodeoxyribonuclease RuvC (192 aa).

Residues aspartate 8, glutamate 67, and aspartate 139 contribute to the active site. Aspartate 8, glutamate 67, and aspartate 139 together coordinate Mg(2+).

It belongs to the RuvC family. Homodimer which binds Holliday junction (HJ) DNA. The HJ becomes 2-fold symmetrical on binding to RuvC with unstacked arms; it has a different conformation from HJ DNA in complex with RuvA. In the full resolvosome a probable DNA-RuvA(4)-RuvB(12)-RuvC(2) complex forms which resolves the HJ. Requires Mg(2+) as cofactor.

It is found in the cytoplasm. The enzyme catalyses Endonucleolytic cleavage at a junction such as a reciprocal single-stranded crossover between two homologous DNA duplexes (Holliday junction).. The RuvA-RuvB-RuvC complex processes Holliday junction (HJ) DNA during genetic recombination and DNA repair. Endonuclease that resolves HJ intermediates. Cleaves cruciform DNA by making single-stranded nicks across the HJ at symmetrical positions within the homologous arms, yielding a 5'-phosphate and a 3'-hydroxyl group; requires a central core of homology in the junction. The consensus cleavage sequence is 5'-(A/T)TT(C/G)-3'. Cleavage occurs on the 3'-side of the TT dinucleotide at the point of strand exchange. HJ branch migration catalyzed by RuvA-RuvB allows RuvC to scan DNA until it finds its consensus sequence, where it cleaves and resolves the cruciform DNA. The protein is Crossover junction endodeoxyribonuclease RuvC of Haemophilus ducreyi (strain 35000HP / ATCC 700724).